A 53-amino-acid polypeptide reads, in one-letter code: uncharacterized protein (53 aa).

Residues 18-38 (FLFFIFYFLFFFIFFTVFGNL) form a helical membrane-spanning segment.

The protein localises to the membrane. This is an uncharacterized protein from Dictyostelium discoideum (Social amoeba).